We begin with the raw amino-acid sequence, 66 residues long: uncharacterized protein (66 aa).

A hydrophobic region spans residues 1-20; that stretch reads MIALAYLATVAIAAMVLAVA.

This is an uncharacterized protein from Streptomyces lividans.